Reading from the N-terminus, the 103-residue chain is Small ribosomal subunit protein uS10c (103 aa).

This sequence belongs to the universal ribosomal protein uS10 family. Part of the 30S ribosomal subunit.

The protein resides in the plastid. The protein localises to the chloroplast. Its function is as follows. Involved in the binding of tRNA to the ribosomes. This chain is Small ribosomal subunit protein uS10c, found in Emiliania huxleyi (Coccolithophore).